Here is a 219-residue protein sequence, read N- to C-terminus: 7-cyano-7-deazaguanine synthase (219 aa).

An ATP-binding site is contributed by 10–20 (FSGGQDSTTCL). The Zn(2+) site is built by Cys-188, Cys-196, Cys-199, and Cys-202.

It belongs to the QueC family. Requires Zn(2+) as cofactor.

It catalyses the reaction 7-carboxy-7-deazaguanine + NH4(+) + ATP = 7-cyano-7-deazaguanine + ADP + phosphate + H2O + H(+). The protein operates within purine metabolism; 7-cyano-7-deazaguanine biosynthesis. In terms of biological role, catalyzes the ATP-dependent conversion of 7-carboxy-7-deazaguanine (CDG) to 7-cyano-7-deazaguanine (preQ(0)). This Neisseria meningitidis serogroup B (strain ATCC BAA-335 / MC58) protein is 7-cyano-7-deazaguanine synthase.